The sequence spans 402 residues: E3 ubiquitin-protein ligase makorin-2 (402 aa).

3 consecutive C3H1-type zinc fingers follow at residues 2–29 (TTKQVTCRYFLHGVCREGNHCQFSHDPS), 31–58 (SKPSTICKFYQRGTCAYGERCRYDHVKL), and 141–168 (QDLPRLCPYAAVGHCYYEENCIYLHGDK). The makorin-type Cys-His stretch occupies residues 169–198 (CEVCGLQVLDPHNPEQRSMHEKMCLLAFEA). The segment at 214–268 (CSICMEVVVQKMNPSDRRFGILSSCCHVFCLACIRKWRCTRNFSNKIIKSCPECR) adopts an RING-type zinc-finger fold. The C3H1-type 4 zinc-finger motif lies at 297-326 (GVGKKPCKYFDQGRGSCPFGGKCLYLHALP).

The protein localises to the cytoplasm. It localises to the nucleus. The catalysed reaction is S-ubiquitinyl-[E2 ubiquitin-conjugating enzyme]-L-cysteine + [acceptor protein]-L-lysine = [E2 ubiquitin-conjugating enzyme]-L-cysteine + N(6)-ubiquitinyl-[acceptor protein]-L-lysine.. It participates in protein modification; protein ubiquitination. Functionally, E3 ubiquitin ligase catalyzing the covalent attachment of ubiquitin moieties onto substrate proteins. Inhibits neurogenesis and axis formation during embryonic development by modulating the phosphatidylinositol 3-kinase (PI3K) pathway. Acts downstream of PI3K and akt1 to up-regulate gsk3b mRNA expression. This chain is E3 ubiquitin-protein ligase makorin-2, found in Takifugu rubripes (Japanese pufferfish).